The sequence spans 389 residues: 3-ketoacyl-CoA thiolase (389 aa).

The active-site Acyl-thioester intermediate is Cys91. Residues His343 and Cys373 each act as proton acceptor in the active site.

This sequence belongs to the thiolase-like superfamily. Thiolase family. In terms of assembly, heterotetramer of two alpha chains (FadB) and two beta chains (FadA).

Its subcellular location is the cytoplasm. It catalyses the reaction an acyl-CoA + acetyl-CoA = a 3-oxoacyl-CoA + CoA. It functions in the pathway lipid metabolism; fatty acid beta-oxidation. Its function is as follows. Catalyzes the final step of fatty acid oxidation in which acetyl-CoA is released and the CoA ester of a fatty acid two carbons shorter is formed. The sequence is that of 3-ketoacyl-CoA thiolase from Citrobacter koseri (strain ATCC BAA-895 / CDC 4225-83 / SGSC4696).